The primary structure comprises 780 residues: LPS-assembly protein LptD (780 aa).

The signal sequence occupies residues methionine 1–alanine 24.

It belongs to the LptD family. Component of the lipopolysaccharide transport and assembly complex. Interacts with LptE and LptA.

Its subcellular location is the cell outer membrane. Its function is as follows. Together with LptE, is involved in the assembly of lipopolysaccharide (LPS) at the surface of the outer membrane. The protein is LPS-assembly protein LptD of Yersinia pestis bv. Antiqua (strain Antiqua).